A 226-amino-acid polypeptide reads, in one-letter code: Ribose-5-phosphate isomerase A (226 aa).

Substrate contacts are provided by residues 33 to 36, 86 to 89, and 99 to 102; these read TGST, DGAD, and KGGG. The active-site Proton acceptor is the E108. K126 serves as a coordination point for substrate.

Belongs to the ribose 5-phosphate isomerase family. In terms of assembly, homodimer.

It catalyses the reaction aldehydo-D-ribose 5-phosphate = D-ribulose 5-phosphate. It functions in the pathway carbohydrate degradation; pentose phosphate pathway; D-ribose 5-phosphate from D-ribulose 5-phosphate (non-oxidative stage): step 1/1. Its function is as follows. Catalyzes the reversible conversion of ribose-5-phosphate to ribulose 5-phosphate. The sequence is that of Ribose-5-phosphate isomerase A from Bordetella bronchiseptica (strain ATCC BAA-588 / NCTC 13252 / RB50) (Alcaligenes bronchisepticus).